A 440-amino-acid chain; its full sequence is Na(+)/H(+) antiporter NhaA (440 aa).

11 consecutive transmembrane segments (helical) span residues 25-45 (FLHIEATSGLVLILCTVVALV), 76-96 (LHHVINDGLMAVFFFVIGLEV), 112-132 (TLPIAAAIGGMIVPATLYLSM), 141-161 (GWGIPMATDIAFVVGCLAILG), 170-190 (VLLLSLAIVDDIGAILVIAIG), 194-214 (SLDGRYLFLAAVAVGAVHFLS), 225-245 (VIVGVLAWIALHESGIHATLI), 312-332 (HPWTAYVIMPVFALANAGVLI), 345-365 (VVIGLVVGKPLGIALFSWLVI), 378-398 (WPILMSGSFLAGIGFTMALFI), and 414-434 (GVLVGSAISAIAGMGLLLWTL).

The protein belongs to the NhaA Na(+)/H(+) (TC 2.A.33) antiporter family.

It localises to the cell inner membrane. It catalyses the reaction Na(+)(in) + 2 H(+)(out) = Na(+)(out) + 2 H(+)(in). Na(+)/H(+) antiporter that extrudes sodium in exchange for external protons. The chain is Na(+)/H(+) antiporter NhaA from Rhodopirellula baltica (strain DSM 10527 / NCIMB 13988 / SH1).